Reading from the N-terminus, the 381-residue chain is Homoserine O-succinyltransferase (381 aa).

The region spanning 53–361 (ILICHALSGS…DSVHGHDAFL (309 aa)) is the AB hydrolase-1 domain. The active-site Nucleophile is the Ser-157. Arg-227 is a binding site for substrate. Active-site residues include Asp-324 and His-357. Substrate is bound at residue Asp-358.

It belongs to the AB hydrolase superfamily. MetX family. In terms of assembly, homodimer.

It is found in the cytoplasm. The enzyme catalyses L-homoserine + succinyl-CoA = O-succinyl-L-homoserine + CoA. The protein operates within amino-acid biosynthesis; L-methionine biosynthesis via de novo pathway; O-succinyl-L-homoserine from L-homoserine: step 1/1. Functionally, transfers a succinyl group from succinyl-CoA to L-homoserine, forming succinyl-L-homoserine. The polypeptide is Homoserine O-succinyltransferase (Saccharophagus degradans (strain 2-40 / ATCC 43961 / DSM 17024)).